The sequence spans 150 residues: MYSILIACLVLLLCLIIYVGHRADHARKYLEGMWHGDPVFLKQSGLQSFYLYIQPDHTCFFSVVNKNGEKLMETKIPCTITNKIYMFFKPIFEFHVVMEDIHSYFPKQFNFLLDSAEGKLILENNHVIYAVLYKDNFATALGKTVKKYIT.

The first 23 residues, 1-23 (MYSILIACLVLLLCLIIYVGHRA), serve as a signal peptide directing secretion.

Belongs to the asfivirus EP152R family.

It is found in the virion. This is an uncharacterized protein from African swine fever virus (isolate Warthog/Namibia/Wart80/1980) (ASFV).